Consider the following 382-residue polypeptide: MSQPELKKSKVDISKTITVLPGDHVGEEVCNEAIKVLQAIEDATPYRNIKFNLQKHLIGGAAIDATGTPLPDESLEAAKNSDAVLLGAVGGPKWGTGSVRPEQGLLKIRKELNLYANLRPCNFASDSLLELSPLKSEIVKGTDFTVVRELVGGIYFGERQEQAESEDKQTAWDTEKYSTEEVTRITRMAAFMALQHNPPLPIWSLDKANVLASSRLWRTTVDKVMSEEFPQLTIQHQLIDSAAMILVQSPTKLNGIIITSNMFGDIISDEASVIPGSLGLLPSASLASLPDTNSAFGLYEPCHGSAPDLTENKVNPVATILSVAMMLRLSLDCVPEAEALEKAVGQVLDSGIRTGDLRGSSSTKEVGDAIAEAVKKVLNQSV.

91–102 contacts NAD(+); the sequence is GPKWGTGSVRPE. Substrate-binding residues include arginine 109, arginine 119, arginine 148, and aspartate 240. The Mg(2+) site is built by aspartate 240, aspartate 265, and aspartate 269. NAD(+) is bound at residue 304 to 315; sequence GSAPDLTENKVN.

This sequence belongs to the isocitrate and isopropylmalate dehydrogenases family. In terms of assembly, homodimer. Mg(2+) is required as a cofactor. It depends on Mn(2+) as a cofactor.

It localises to the cytoplasm. The catalysed reaction is (2R,3S)-3-isopropylmalate + NAD(+) = 4-methyl-2-oxopentanoate + CO2 + NADH. It functions in the pathway amino-acid biosynthesis; L-leucine biosynthesis; L-leucine from 3-methyl-2-oxobutanoate: step 3/4. Functionally, catalyzes the oxidation of 3-carboxy-2-hydroxy-4-methylpentanoate (3-isopropylmalate) to 3-carboxy-4-methyl-2-oxopentanoate. The product decarboxylates to 4-methyl-2 oxopentanoate. This Debaryomyces hansenii (strain ATCC 36239 / CBS 767 / BCRC 21394 / JCM 1990 / NBRC 0083 / IGC 2968) (Yeast) protein is 3-isopropylmalate dehydrogenase (LEU2).